The chain runs to 158 residues: Proteinase inhibitor type-2 (158 aa).

The first 24 residues, Met1–Ala24, serve as a signal peptide directing secretion. 2 consecutive repeat copies span residues Asp29–Asn86 and Pro87–Lys146. 8 disulfides stabilise this stretch: Cys33–Cys121, Cys37–Cys117, Cys45–Cys127, Cys57–Cys94, Cys60–Cys78, Cys61–Cys90, Cys67–Cys103, and Cys120–Cys138.

The protein belongs to the protease inhibitor I20 (potato type II proteinase inhibitor) family.

This Solanum tuberosum (Potato) protein is Proteinase inhibitor type-2.